A 188-amino-acid polypeptide reads, in one-letter code: Oleosin S2-2 (188 aa).

Alanine 2 is modified (N-acetylalanine). Residues 2–51 (ATVERRVQVDPTDKRIHLQPQYEGDVGYGYGYGGRADYKSSGPSSNQIVA) form a polar region. The next 3 helical transmembrane spans lie at 49–69 (IVAL…AGLT), 74–94 (VIGL…IVPA), and 96–116 (ITIG…LTGL). Positions 52–125 (LIVGVPVGGS…LSSVSWVLNY (74 aa)) are hydrophobic. The disordered stretch occupies residues 164-188 (DKAHEAHDTSLTTETTEPGKTRRHT). Positions 172 to 181 (TSLTTETTEP) are enriched in polar residues.

It belongs to the oleosin family.

The protein resides in the lipid droplet. The protein localises to the membrane. May have a structural role to stabilize the lipid body during desiccation of the seed by preventing coalescence of the oil. Probably interacts with both lipid and phospholipid moieties of lipid bodies. May also provide recognition signals for specific lipase anchorage in lipolysis during seedling growth. This is Oleosin S2-2 (S2) from Brassica napus (Rape).